The sequence spans 226 residues: Octanoyltransferase (226 aa).

Residues 37–220 form the BPL/LPL catalytic domain; it reads GTAGELIWLL…SFSKVFGPVE (184 aa). Substrate contacts are provided by residues 76 to 83, 151 to 153, and 164 to 166; these read RGGQFTYH, AIG, and GIS. Cys182 acts as the Acyl-thioester intermediate in catalysis.

It belongs to the LipB family.

It is found in the cytoplasm. The enzyme catalyses octanoyl-[ACP] + L-lysyl-[protein] = N(6)-octanoyl-L-lysyl-[protein] + holo-[ACP] + H(+). It participates in protein modification; protein lipoylation via endogenous pathway; protein N(6)-(lipoyl)lysine from octanoyl-[acyl-carrier-protein]: step 1/2. In terms of biological role, catalyzes the transfer of endogenously produced octanoic acid from octanoyl-acyl-carrier-protein onto the lipoyl domains of lipoate-dependent enzymes. Lipoyl-ACP can also act as a substrate although octanoyl-ACP is likely to be the physiological substrate. The protein is Octanoyltransferase of Caulobacter vibrioides (strain ATCC 19089 / CIP 103742 / CB 15) (Caulobacter crescentus).